The following is a 597-amino-acid chain: Arginine--tRNA ligase (597 aa).

Residues 125–135 carry the 'HIGH' region motif; it reads PNTNKPLHLGH.

Belongs to the class-I aminoacyl-tRNA synthetase family. Monomer.

It localises to the cytoplasm. It carries out the reaction tRNA(Arg) + L-arginine + ATP = L-arginyl-tRNA(Arg) + AMP + diphosphate. This is Arginine--tRNA ligase from Parabacteroides distasonis (strain ATCC 8503 / DSM 20701 / CIP 104284 / JCM 5825 / NCTC 11152).